A 61-amino-acid chain; its full sequence is Small ribosomal subunit protein uS14 (61 aa).

Zn(2+) contacts are provided by Cys-24, Cys-27, Cys-40, and Cys-43.

This sequence belongs to the universal ribosomal protein uS14 family. Zinc-binding uS14 subfamily. Part of the 30S ribosomal subunit. Contacts proteins S3 and S10. Requires Zn(2+) as cofactor.

Its function is as follows. Binds 16S rRNA, required for the assembly of 30S particles and may also be responsible for determining the conformation of the 16S rRNA at the A site. The protein is Small ribosomal subunit protein uS14 of Moorella thermoacetica (strain ATCC 39073 / JCM 9320).